The following is a 275-amino-acid chain: Rhamnulose-1-phosphate aldolase (275 aa).

Glu-117 is an active-site residue. Zn(2+)-binding residues include His-141, His-143, and His-212.

Belongs to the aldolase class II family. RhaD subfamily. Homotetramer. Zn(2+) is required as a cofactor.

It localises to the cytoplasm. It carries out the reaction L-rhamnulose 1-phosphate = (S)-lactaldehyde + dihydroxyacetone phosphate. The protein operates within carbohydrate degradation; L-rhamnose degradation; glycerone phosphate from L-rhamnose: step 3/3. In terms of biological role, catalyzes the reversible cleavage of L-rhamnulose-1-phosphate to dihydroxyacetone phosphate (DHAP) and L-lactaldehyde. This chain is Rhamnulose-1-phosphate aldolase, found in Salmonella paratyphi C (strain RKS4594).